Reading from the N-terminus, the 168-residue chain is MKRLSIAITSLLMAASASTIAATEPPLNQQQPLEKIAPYPQAEKGMSRQVIFLEPQEDESRFKVELLIGKTIEVDCNRHMLGGNLETRTLSGWGFDYLVMDKISEPASTMMACPDNTRRPQFIAANLGDAAMQRYNSRLPIVVYVPQGVDVKYRIWEAGKDVRSAQVK.

The N-terminal stretch at 1-21 (MKRLSIAITSLLMAASASTIA) is a signal peptide. Cysteines 76 and 113 form a disulfide.

It belongs to the protease inhibitor I11 (ecotin) family. Homodimer.

Its subcellular location is the periplasm. Its function is as follows. General inhibitor of pancreatic serine proteases: inhibits chymotrypsin, trypsin, elastases, factor X, kallikrein as well as a variety of other proteases. The protein is Ecotin of Yersinia enterocolitica serotype O:8 / biotype 1B (strain NCTC 13174 / 8081).